The following is a 312-amino-acid chain: MAQPELDLSKAPAHWGMNFTETTHQQPSRSIDPSNVTFPQGYTVVVIGAGKGIGEHIAKAYVQARAENIIITSRTGSDLDRVKKELETLAQQTGQAVKVSTLVQDATKPESYTKLKDLLEEGFNGRLDTLVFCAGGGPVGTLWTPRIDETDVDEWNESIALNFTGSYYAAKYLVPLMLRPQSQGKTIVNITSAASHFTGGNITPASYSIGKLALNRFTQILGENYADQGLVVVAVHPGSSPTPGALGSMPPSLHNILTDDQGLCGAVCVWISKKKREWISGRYICATWDMDELESKKEEIVKEDKLKWRMAV.

Residues Val46, Ile47, Lys171, Tyr207, Lys211, and Thr242 each contribute to the NADP(+) site. Tyr207 acts as the Proton donor in catalysis. The active-site Lowers pKa of active site Tyr is Lys211.

This sequence belongs to the short-chain dehydrogenases/reductases (SDR) family.

It participates in pigment biosynthesis. The protein operates within secondary metabolite biosynthesis. Short chain dehydrogenase; part of the gene cluster that mediates the biosynthesis of pleosporalin A, ascomycone A, as well as a third cryptic naphthoquinone derived pigment, all responsible for the coloration of conidia. Essential for the production of pleosporalin A, but not the 2 other final products. The pathway begins with the biosynthesis of the cyclized heptaketide 3-acetonyl-1,6,8-trihydroxy-2-naphthaldehyde by the NR-PKS pgmA. The C-6 hydroxyl group is further methylated by the O-methyltransferase pgmB to yield fusarubinaldehyde which is in turn oxidized by the cytochrome P450 monooxygenase pgmC at C-9. The C-1 hydroxyl group is then methylated spontaneously. Although pgmE, pgmD and pgmH are essential for the production of pleosporalin A, it is not the case for the 2 other final products and it remains difficult to assign a specific function to each enzyme. PgmF and pgmG seem not to be involved in pigment biosynthesis although they were regulated by the cluster-specific transcription factor pgmR. The polypeptide is Short chain dehydrogenase pgmD (Aspergillus terreus).